The primary structure comprises 574 residues: Frizzled and smoothened-like protein G (574 aa).

An N-terminal signal peptide occupies residues 1-19; the sequence is MKSIIFITFFIFFLKKLNG. Over 20-246 the chain is Extracellular; the sequence is LPNGYGVGLV…EKWNQIENLS (227 aa). The region spanning 30–181 is the FZ domain; sequence DPNGQCMNYI…GLYEVPCFNP (152 aa). Intrachain disulfides connect cysteine 35–cysteine 109, cysteine 48–cysteine 102, cysteine 91–cysteine 138, and cysteine 127–cysteine 178. Residues asparagine 119, asparagine 161, asparagine 187, asparagine 206, asparagine 233, and asparagine 244 are each glycosylated (N-linked (GlcNAc...) asparagine). The helical transmembrane segment at 247-267 threads the bilayer; sequence KVLSTISFVCSIYNILSFGIL. Residues 268-273 lie on the Cytoplasmic side of the membrane; it reads KKKKTK. Residues 274–294 form a helical membrane-spanning segment; sequence YTICISALSASVALINLGDII. At 295-324 the chain is on the extracellular side; sequence KIGVGYEKVLCPEPGRFATQVDDPLCGLTA. The helical transmembrane segment at 325–345 threads the bilayer; it reads ALFHVGICSTVLWTTTMAIYL. At 346–358 the chain is on the cytoplasmic side; that stretch reads YSAIKNIKLFKFR. A helical membrane pass occupies residues 359-379; the sequence is YFIIFNTGFSLTSLIIAASAS. Topologically, residues 380–401 are extracellular; the sequence is KFEAGTGSIECWIRDRWYSICL. Residues 402 to 422 traverse the membrane as a helical segment; the sequence is FWLPCGICLLIGTICIASVIV. Residues 423 to 445 are Cytoplasmic-facing; sequence EIYKVSKNIKLSESETIMRQIKP. The chain crosses the membrane as a helical span at residues 446 to 466; it reads IISVILVSGSFTYLFIIFFDI. Residues 467-502 are Extracellular-facing; it reads ERNFGGYRSAVTDYVLCLLNSTDNGIECHTSGPSYN. An N-linked (GlcNAc...) asparagine glycan is attached at asparagine 486. The helical transmembrane segment at 503 to 523 threads the bilayer; that stretch reads PYFMFYFFMRFFGILFFLIYG. Residues 524 to 574 are Cytoplasmic-facing; sequence TSKNARDSWYELFIKIKVSLSETSSTISNNSGGGSSQQKQQQQNEIKLEKI. Over residues 550–568 the composition is skewed to low complexity; that stretch reads ISNNSGGGSSQQKQQQQNE. The disordered stretch occupies residues 550-574; it reads ISNNSGGGSSQQKQQQQNEIKLEKI.

It belongs to the G-protein coupled receptor Fz/Smo family.

It localises to the membrane. The sequence is that of Frizzled and smoothened-like protein G (fslG) from Dictyostelium discoideum (Social amoeba).